The primary structure comprises 59 residues: Small ribosomal subunit protein bS21 (59 aa).

The disordered stretch occupies residues 40-59; that stretch reads KPSVKRKKKSEAARKRKSFR. Residues 43-59 are compositionally biased toward basic residues; the sequence is VKRKKKSEAARKRKSFR.

The protein belongs to the bacterial ribosomal protein bS21 family.

This chain is Small ribosomal subunit protein bS21, found in Desulforamulus reducens (strain ATCC BAA-1160 / DSM 100696 / MI-1) (Desulfotomaculum reducens).